Here is a 507-residue protein sequence, read N- to C-terminus: UDP-N-acetylglucosamine 1-carboxyvinyltransferase 1 (507 aa).

41 to 42 (KN) provides a ligand contact to phosphoenolpyruvate. Residue R112 coordinates UDP-N-acetyl-alpha-D-glucosamine. The Proton donor role is filled by C136. C136 carries the 2-(S-cysteinyl)pyruvic acid O-phosphothioketal modification. UDP-N-acetyl-alpha-D-glucosamine is bound by residues 141–145 (RPIDL), D328, and L350.

This sequence belongs to the EPSP synthase family. MurA subfamily.

It localises to the cytoplasm. The enzyme catalyses phosphoenolpyruvate + UDP-N-acetyl-alpha-D-glucosamine = UDP-N-acetyl-3-O-(1-carboxyvinyl)-alpha-D-glucosamine + phosphate. Its pathway is cell wall biogenesis; peptidoglycan biosynthesis. In terms of biological role, cell wall formation. Adds enolpyruvyl to UDP-N-acetylglucosamine. In Legionella pneumophila (strain Lens), this protein is UDP-N-acetylglucosamine 1-carboxyvinyltransferase 1.